The following is a 222-amino-acid chain: UPF0758 protein YicR (222 aa).

An MPN domain is found at 100 to 222; that stretch reads PLLSPEMTRE…NVSFAERGWI (123 aa). The Zn(2+) site is built by His171, His173, and Asp184. The JAMM motif signature appears at 171-184; the sequence is HNHPSGCAEPSKAD.

It belongs to the UPF0758 family. YicR subfamily.

This chain is UPF0758 protein YicR, found in Shigella boydii serotype 18 (strain CDC 3083-94 / BS512).